The primary structure comprises 338 residues: Solute carrier family 35 member G6 (338 aa).

The tract at residues 1–25 (MAGSHPYLNPPDSTHPSPPSAPPSL) is disordered. A run of 9 helical transmembrane segments spans residues 40 to 60 (LLVALLGGGLPAGFVGPLSHM), 67 to 87 (LPSLELLICRCLFHLPIALLL), 105 to 125 (YFYALLNVLSIGCAYSAVQVV), 160 to 180 (CGLLGSILGLIIIVGPGLWTL), 190 to 210 (ALGYGQAFVGGLALSLGLLVY), 221 to 241 (TVAFLSGLVGLLGSVPGLFVL), 255 to 275 (CVGAVGILALVSFTCVSYAVT), 281 to 301 (LVCAVLHSEVVVALILQYYML), and 310 to 330 (IVGAGVVLGSIAIITAWNLSC). The 126-residue stretch at 49-174 (LPAGFVGPLS…SILGLIIIVG (126 aa)) folds into the EamA 1 domain. An EamA 2 domain is found at 272 to 325 (YAVTKAHPALVCAVLHSEVVVALILQYYMLHETVAPSDIVGAGVVLGSIAIITA).

Belongs to the SLC35G solute transporter family. In terms of tissue distribution, expressed in placenta and testis.

The protein resides in the membrane. This is Solute carrier family 35 member G6 (SLC35G6) from Homo sapiens (Human).